The chain runs to 277 residues: Large ribosomal subunit protein uL2 (277 aa).

Disordered regions lie at residues 35–57 (RPLH…QGGG) and 222–277 (GVAM…NRRR). 2 stretches are compositionally biased toward basic residues: residues 37–57 (LHSK…QGGG) and 268–277 (VRRRKQNRRR).

It belongs to the universal ribosomal protein uL2 family. As to quaternary structure, part of the 50S ribosomal subunit. Forms a bridge to the 30S subunit in the 70S ribosome.

Functionally, one of the primary rRNA binding proteins. Required for association of the 30S and 50S subunits to form the 70S ribosome, for tRNA binding and peptide bond formation. It has been suggested to have peptidyltransferase activity; this is somewhat controversial. Makes several contacts with the 16S rRNA in the 70S ribosome. This chain is Large ribosomal subunit protein uL2, found in Frankia casuarinae (strain DSM 45818 / CECT 9043 / HFP020203 / CcI3).